The chain runs to 136 residues: Large ribosomal subunit protein bL21 (136 aa).

The protein belongs to the bacterial ribosomal protein bL21 family. In terms of assembly, part of the 50S ribosomal subunit. Contacts protein L20.

Its function is as follows. This protein binds to 23S rRNA in the presence of protein L20. This is Large ribosomal subunit protein bL21 from Gloeothece citriformis (strain PCC 7424) (Cyanothece sp. (strain PCC 7424)).